We begin with the raw amino-acid sequence, 378 residues long: Glycerate kinase (378 aa).

It belongs to the glycerate kinase type-1 family.

It catalyses the reaction (R)-glycerate + ATP = (2R)-3-phosphoglycerate + ADP + H(+). The protein is Glycerate kinase (glxK) of Haemophilus influenzae (strain ATCC 51907 / DSM 11121 / KW20 / Rd).